Here is a 477-residue protein sequence, read N- to C-terminus: Homospermidine synthase (477 aa).

The protein belongs to the saccharopine dehydrogenase family. In terms of assembly, homodimer. NAD(+) is required as a cofactor.

The enzyme catalyses 2 putrescine = sym-homospermidine + NH4(+). It catalyses the reaction putrescine + spermidine = sym-homospermidine + propane-1,3-diamine. Functionally, involved in the NAD(+)-dependent synthesis of the polyamine homospermidine from putrescine. The protein is Homospermidine synthase (hss) of Blastochloris viridis (Rhodopseudomonas viridis).